A 353-amino-acid polypeptide reads, in one-letter code: Photosystem II protein D1 (353 aa).

At Thr2 the chain carries N-acetylthreonine. Thr2 carries the post-translational modification Phosphothreonine. The next 3 helical transmembrane spans lie at 29–46 (YIGW…TATS), 118–133 (HFLL…EWEL), and 142–156 (WIAV…AATA). Position 118 (His118) interacts with chlorophyll a. Tyr126 contacts pheophytin a. Residues Asp170 and Glu189 each coordinate [CaMn4O5] cluster. Residues 197-218 (FHMLGVAGVFGGSLFSAMHGSL) traverse the membrane as a helical segment. Chlorophyll a is bound at residue His198. Residues His215 and 264–265 (SF) contribute to the a quinone site. His215 lines the Fe cation pocket. Residue His272 coordinates Fe cation. A helical membrane pass occupies residues 274–288 (FLAAWPVIGIWFTAL). 4 residues coordinate [CaMn4O5] cluster: His332, Glu333, Asp342, and Ala344. Positions 345-353 (AVEAPSTNG) are excised as a propeptide.

This sequence belongs to the reaction center PufL/M/PsbA/D family. In terms of assembly, PSII is composed of 1 copy each of membrane proteins PsbA, PsbB, PsbC, PsbD, PsbE, PsbF, PsbH, PsbI, PsbJ, PsbK, PsbL, PsbM, PsbT, PsbX, PsbY, PsbZ, Psb30/Ycf12, at least 3 peripheral proteins of the oxygen-evolving complex and a large number of cofactors. It forms dimeric complexes. The cofactor is The D1/D2 heterodimer binds P680, chlorophylls that are the primary electron donor of PSII, and subsequent electron acceptors. It shares a non-heme iron and each subunit binds pheophytin, quinone, additional chlorophylls, carotenoids and lipids. D1 provides most of the ligands for the Mn4-Ca-O5 cluster of the oxygen-evolving complex (OEC). There is also a Cl(-1) ion associated with D1 and D2, which is required for oxygen evolution. The PSII complex binds additional chlorophylls, carotenoids and specific lipids.. In terms of processing, tyr-161 forms a radical intermediate that is referred to as redox-active TyrZ, YZ or Y-Z. C-terminally processed by CTPA; processing is essential to allow assembly of the oxygen-evolving complex and thus photosynthetic growth.

It localises to the plastid. It is found in the chloroplast thylakoid membrane. The catalysed reaction is 2 a plastoquinone + 4 hnu + 2 H2O = 2 a plastoquinol + O2. Its function is as follows. Photosystem II (PSII) is a light-driven water:plastoquinone oxidoreductase that uses light energy to abstract electrons from H(2)O, generating O(2) and a proton gradient subsequently used for ATP formation. It consists of a core antenna complex that captures photons, and an electron transfer chain that converts photonic excitation into a charge separation. The D1/D2 (PsbA/PsbD) reaction center heterodimer binds P680, the primary electron donor of PSII as well as several subsequent electron acceptors. The sequence is that of Photosystem II protein D1 from Buxus microphylla (Littleleaf boxwood).